The sequence spans 1805 residues: MKPFDKKPSLQPIYDIGFDDGYLQSEYEKNRSKTDVDKIENQLLKEIKSLEDELKNLKGLKNQAEDNPELDKKINHLEVDLNRLVNEYKNFQFQKNHMVDKVSELDNLTRFYKNELTRLQQENADFLNSKYANLANFQANYHNKLNDFHRLIENQNQTINRLNQKINGNQNLIDNNVALLQNPNITVEKKNYLLNVIDQLYNELDQLENQKRLLSIEYENTYRELVSADNELQNVYENIDQNQIQFKHQYQTYRDELSQLERKIQLTKQELVDKESALRVKIDDADFYINARLAELDDVAKQLSFQDGITKQNAQHVEDKLVALNKEKDRLNTQKEAFFNLRQSALIDINKLQQENELFAKHLEHQQNEFEQKQSDSLLKLETEYKALQHKINEFKNESATKSEELLNQERELFEKRREIDTLLTQASLEYEHQRESSQLLKDKQNEVKQHFQNLEYAKKELDKERNLLDQQKKVDSEAIFQLKEKVAQERKELEELYLVKKQKQDQKENELLFFEKQLKQHQADFENELEAKQQELFEAKHALERSFIKLEDKEKDLNTKAQQIANEFSQLKTDKSKSADFELMLQNEYENLQQEKQKLFQERTYFERNAAVLSNRLQQKREELLQQKETLDQLTKSFEQERLINQREHKELVASVEKQKEILGKKLQDFSQTSLNASKNLAEREMAIKFKEKEIEATEKQLLNDVNNAEVIQADLAQLNQSLNQERSELQNAKQRIADFHNDSLKKLNEYELSLQKRLQELQTLEANQKQHSYQNQAYFEGELDKLNREKQAFLNLRKKQTMEVDAIKQRLSDKHQALNMQQAELDRKTHELNNAFLNHDADQKSLQDQLATVKETQKLIDLERSALLEKQREFAENVAGFKRHWSNKTSQLQKIYELTKKQESEQTQKETELKIAFSDLQKDYQVFELQKDQEFRQIEAKQRELDKLAEKNNQVKLELDNRFQALQNQKQDTVQAQLELEREQHQLNLEQTAFNQANESLLKQREQLTKKIQAFHYELKKRNQFLALKGKRLFAKEQDQQRKDQEINWRFKQFEKEYTDFDEAKKRELEELEKIRRSLSQSNVELERKREKLATDFTNLNKVQHNTQINRDQLNSQIRQFLLERKNFQRFSNEANAKKAFLIKRLRSFASNLKLQKEALAIQKLEFDKRDEQQKKELQQATLQLEQFKFEKQNFDIEKQRQLVAIKTQCEKLSDEKKALNQKLVELKNLSQTYLANKNKAEYSQQQLQQKYTNLLDLKENLERTKDQLDKKHRSIFARLTKFANDLRFEKKQLLKAQRIVDDKNRLLKENERNLHFLSNETERKRAVLEDQISYFEKQRKQATDAILASHKEVKKKEGELQKLLVELETRKTKLNNDFAKFSRQREEFENQRLKLLELQKTLQTQTNSNNFKTKAIQEIENSYKRGMEELNFQKKEFDKNKSRLYEYFRKMRDEIERKESQVKLVLKETQRKANLLEAQANKLNIEKNTIDFKEKELKAFKDKVDQDIDSTNKQRKELNELLNENKLLQQSLIERERAINSKDSLLNKKIETIKRQLHDKEMRVLRLVDRMKLAEQKYQTEINRLRTQTFDSEKQDIKNFFPPLFKINGNDMAFPYLYPWLYPQQKQDDNTLQIRQLFEQQLQFMQQRYENELNELRRQRNLLEKKLDQIQLESQLNNKQSEFSKVESMMEKLLEKTESRLNDFDQKINYLTKKVNQHNTYQPSSYQPTPSYQDSDKQQLLFRIQELEKQNLFQQQFQPAPAVVQQPTSFAAPNITKQQQIAQLNAEINNIKRLIAQKAASK.

Coiled coils occupy residues 28 to 838 (EKNR…NNAF), 914 to 1591 (ELKI…LRTQ), 1632 to 1723 (DNTL…QHNT), and 1777 to 1804 (NITK…KAAS).

Functionally, component of the cytoskeleton-like structure which stabilizes the shape of the wall-less Mycoplasma. This cytoskeleton-like network of accessory proteins containing HMW proteins 1 to 5 allows the proper anchoring of cytadhesin proteins in the mycoplasmal membrane at the attachment organelle. This is Cytadherence high molecular weight protein 2 (hmw2) from Mycoplasma genitalium (strain ATCC 33530 / DSM 19775 / NCTC 10195 / G37) (Mycoplasmoides genitalium).